We begin with the raw amino-acid sequence, 51 residues long: Protein HokD (51 aa).

The chain crosses the membrane as a helical span at residues 5 to 25; sequence KAMLIALIVICLTVIVTALVT.

The protein belongs to the Hok/Gef family.

Its subcellular location is the cell inner membrane. Functionally, toxic component of a type I toxin-antitoxin (TA) system. When overexpressed kills cells within minutes; causes collapse of the transmembrane potential and arrest of respiration. Its toxic effect is probably neutralized by an antisense antitoxin Sok RNA. This is Protein HokD (hokD) from Escherichia coli O157:H7.